A 579-amino-acid polypeptide reads, in one-letter code: Alpha-longipinene synthase (579 aa).

4 residues coordinate Mg(2+): Asp-332, Asp-336, Asp-476, and Asn-484. A DDXXD motif motif is present at residues 332 to 336; sequence DDLYD.

It belongs to the terpene synthase family. Tpsd subfamily. Mg(2+) is required as a cofactor. The cofactor is Mn(2+).

The enzyme catalyses (2E,6E)-farnesyl diphosphate = alpha-longipinene + diphosphate. The protein operates within sesquiterpene biosynthesis. It functions in the pathway terpene metabolism; oleoresin biosynthesis. Its function is as follows. Terpene synthase (TPS) involved in the biosynthesis of sesquiterpene natural products included in conifer oleoresin secretions and volatile emissions; these compounds contribute to biotic and abiotic stress defense against herbivores and pathogens. Catalyzes the conversion of (2E,6E)-farnesyl diphosphate (FPP) to alpha-longipinene. This chain is Alpha-longipinene synthase, found in Picea sitchensis (Sitka spruce).